The chain runs to 292 residues: ATP synthase gamma chain (292 aa).

The protein belongs to the ATPase gamma chain family. As to quaternary structure, F-type ATPases have 2 components, CF(1) - the catalytic core - and CF(0) - the membrane proton channel. CF(1) has five subunits: alpha(3), beta(3), gamma(1), delta(1), epsilon(1). CF(0) has three main subunits: a, b and c.

It localises to the cell membrane. In terms of biological role, produces ATP from ADP in the presence of a proton gradient across the membrane. The gamma chain is believed to be important in regulating ATPase activity and the flow of protons through the CF(0) complex. This chain is ATP synthase gamma chain, found in Streptococcus suis (strain 05ZYH33).